Reading from the N-terminus, the 864-residue chain is MRWIKVMAGLLPMIGSKGADEKDSSQQRRLSRVVVPEHYDLHVKILDAGFCGSVGIRVMISQDVSEIVLNAKELEIRDAGIVVEGARIPGRVVVGEAEKELEVVRIVFPSSLRAGPGYLTMEFCGDYNNGLVGLYKSGGPKEVYSTHFEPTDARWVFPCFDQPDMKATFKISIDAGSKFTVLANTQAIPSLREEYGDRKIEYFEETCKMSTYLVAFVVGELSYIEDWSKDGVRLRVYGDSSEVEWGRYGLEVGKRCLEYFSEYFGVGYEFPRAGSAKIDMVGIPNFSSGAMENWGLITFRRESLLYVPGKSNVEDMKNVAETVCHELGHMWFGNLVTMSWWDDLWLNEGFATWVSFKGMENIGSVVSWDVWGEFVLWNVVRGMVDDGLGKSHQIRMNVTDPGEIGEIFDSISYCKGASVIRMIERYVGESVFMLGIRRYIKEHMYGNGNAMSLWKAIGEEYGEDISEMVEGWISQAGYPVVSVQDCGSSLVLSQSRYSMLGKSDDSLWTIPVVVSWEGKGQERIELRGRETTVRKRSSVYKVNAEYGGFYRVLYDSAGLSGLESRIDSLSVVDRVNVIEDVFGLGFGLYGGLEHGLRRISEYYSDSYHVARSGIEKLLRLRSVFYDDAEIVSLIDKKVRKMILPCVGRIDVFDIGTSVESVSMNKYVLSVGVEVGIREAVEKVQELWRRHVEAGEELGELRWIVYKAVVDENLGYMMDKYKNGDTPGMRREVMNGFSGIKREENFLDVVGNLSQFSVEDIGVVIGSISRGGAFRDAMVEYVVSHGEELYLMVHKNAMLYNMIIMSLRHVSGDLIVEKVERFLSGIKHSGSNLSIEKVRNEIQWRRRMRGIREEVLRGLLPEAEK.

Residues Glu-149 and Gly-289–Asn-293 contribute to the substrate site. His-325 contributes to the Zn(2+) binding site. Glu-326 acts as the Proton acceptor in catalysis. Residues His-329 and Glu-348 each coordinate Zn(2+).

It belongs to the peptidase M1 family. The cofactor is Zn(2+).

In Encephalitozoon cuniculi (strain GB-M1) (Microsporidian parasite), this protein is Probable M1 family aminopeptidase 2.